The primary structure comprises 463 residues: MHEKLTTRFAPSPTGYLHIGGLRTALYNYLYARKNGGNFLLRIEDTDLKRNSKEATKAIIEAFKWCGLEHDGEVTYQSERFDLYKEYVKKLLDEGKAYYCYMSKEELEELRAKQEAAKERPRYDGRYREFTGTPPQGIEPVVRIKAPQSGEIVFKDGVKGEVRFKAEDIMDDFIIARSDGTPTYNFTVVIDDALMGVSDVIRGDDHLSNTPKQIVLYEALGFKIPKFFHVAMIHGEDGKKLSKRHGATDVMEYKEMGILPQALLNFLVRLGWSHGDDEVFSLEDLKKLFDPYHINKSASCYNAKKLEWLNAHYIKTLPFEEINRQLKDLGFDLSVYEKAGFLLDLLRERAKTLHDIINGAKSIVNAPQNYDENAVQKFINKNNLELLQAFANTLKDQKTGKDFEDFTNDFLEKKEAKLKDLAQPIRIALTGSAVSPSIFEVLEFLEVDECKKRIENFLKVRGK.

Positions 11–21 match the 'HIGH' region motif; sequence PSPTGYLHIGG. Positions 240–244 match the 'KMSKS' region motif; sequence KLSKR. Lys243 contacts ATP.

This sequence belongs to the class-I aminoacyl-tRNA synthetase family. Glutamate--tRNA ligase type 1 subfamily. In terms of assembly, monomer.

It is found in the cytoplasm. It carries out the reaction tRNA(Glu) + L-glutamate + ATP = L-glutamyl-tRNA(Glu) + AMP + diphosphate. Catalyzes the attachment of glutamate to tRNA(Glu) in a two-step reaction: glutamate is first activated by ATP to form Glu-AMP and then transferred to the acceptor end of tRNA(Glu). The protein is Glutamate--tRNA ligase 2 of Campylobacter jejuni (strain RM1221).